The primary structure comprises 485 residues: Probable aspartic-type endopeptidase opsB (485 aa).

The signal sequence occupies residues 1–20 (MRHIFSLLSIVCLMVKHGAC). Residues 69 to 397 (YFCNVTLGTP…DIANNEISIA (329 aa)) form the Peptidase A1 domain. N72 carries an N-linked (GlcNAc...) asparagine glycan. Residue D87 is part of the active site. N-linked (GlcNAc...) asparagine glycosylation is found at N99, N107, N111, and N132. Residue D285 is part of the active site. N328, N337, and N402 each carry an N-linked (GlcNAc...) asparagine glycan. S461 carries GPI-anchor amidated serine lipidation. Positions 462–485 (AGVARADKQYLAIALIAVWFVLGL) are cleaved as a propeptide — removed in mature form.

It belongs to the peptidase A1 family.

The protein resides in the cell membrane. Functionally, probable GPI-anchored aspartic-type endopeptidase which contributes to virulence. This is Probable aspartic-type endopeptidase opsB (opsB) from Aspergillus fumigatus (strain ATCC MYA-4609 / CBS 101355 / FGSC A1100 / Af293) (Neosartorya fumigata).